The chain runs to 356 residues: S-adenosylmethionine:tRNA ribosyltransferase-isomerase (356 aa).

This sequence belongs to the QueA family. In terms of assembly, monomer.

It is found in the cytoplasm. It catalyses the reaction 7-aminomethyl-7-carbaguanosine(34) in tRNA + S-adenosyl-L-methionine = epoxyqueuosine(34) in tRNA + adenine + L-methionine + 2 H(+). It functions in the pathway tRNA modification; tRNA-queuosine biosynthesis. Its function is as follows. Transfers and isomerizes the ribose moiety from AdoMet to the 7-aminomethyl group of 7-deazaguanine (preQ1-tRNA) to give epoxyqueuosine (oQ-tRNA). The polypeptide is S-adenosylmethionine:tRNA ribosyltransferase-isomerase (Escherichia coli O127:H6 (strain E2348/69 / EPEC)).